A 201-amino-acid chain; its full sequence is Small ribosomal subunit protein eS1 (201 aa).

This sequence belongs to the eukaryotic ribosomal protein eS1 family.

This is Small ribosomal subunit protein eS1 from Methanoregula boonei (strain DSM 21154 / JCM 14090 / 6A8).